Reading from the N-terminus, the 251-residue chain is Probable transcriptional regulatory protein RSal33209_2002 (251 aa).

This sequence belongs to the TACO1 family.

It localises to the cytoplasm. The polypeptide is Probable transcriptional regulatory protein RSal33209_2002 (Renibacterium salmoninarum (strain ATCC 33209 / DSM 20767 / JCM 11484 / NBRC 15589 / NCIMB 2235)).